Reading from the N-terminus, the 78-residue chain is uncharacterized protein (78 aa).

A helical transmembrane segment spans residues 44–66; it reads ALYSLGFFLCTTIVIFSNIKFVV.

Belongs to the TatC family.

Its subcellular location is the plastid. It is found in the chloroplast membrane. This is an uncharacterized protein from Dictyota dichotoma.